A 566-amino-acid chain; its full sequence is Alpha-N-acetylgalactosaminide alpha-2,6-sialyltransferase 1 (566 aa).

The Cytoplasmic portion of the chain corresponds to 1–16; that stretch reads MGFLIRRLPKDSRIFR. A helical; Signal-anchor for type II membrane protein membrane pass occupies residues 17–37; that stretch reads WLLILTVFSFIITSFSALFGM. At 38–566 the chain is on the lumenal side; sequence EKSIFRQLKI…ENIMKLYQRS (529 aa). 2 N-linked (GlcNAc...) asparagine glycosylation sites follow: Asn66 and Asn132. The segment at 138–161 is disordered; sequence ASVVERTKEKTTARPVPGVGEADG. An N-linked (GlcNAc...) asparagine glycan is attached at Asn192. Repeat 1 spans residues 247–254; that stretch reads SSSPVSTC. Residues 247 to 337 form a 2 X 8 AA repeats of S-S-S-X-V-S-T-C region; sequence SSSPVSTCSE…ANSSSNVSTC (91 aa). 2 disulfides stabilise this stretch: Cys254/Cys337 and Cys340/Cys508. 5 N-linked (GlcNAc...) asparagine glycosylation sites follow: Asn275, Asn286, Asn306, Asn329, and Asn333. The stretch at 330–337 is repeat 2; the sequence is SSSNVSTC.

The protein belongs to the glycosyltransferase 29 family. As to expression, heart, kidney, testes, brain, liver and lung.

It localises to the golgi apparatus membrane. It carries out the reaction a beta-D-galactosyl-(1-&gt;3)-N-acetyl-alpha-D-galactosaminyl derivative + CMP-N-acetyl-beta-neuraminate = a beta-D-galactosyl-(1-&gt;3)-[N-acetyl-alpha-neuraminyl-(2-&gt;6)]-N-acetyl-alpha-D-galactosaminyl derivative + CMP + H(+). The enzyme catalyses a 3-O-[N-acetyl-alpha-D-galactosaminyl]-L-seryl-[protein] + CMP-N-acetyl-beta-neuraminate = a 3-O-[N-acetyl-alpha-neuraminosyl-(2-&gt;6)-N-acetyl-alpha-D-galactosaminyl]-L-seryl-[protein] + CMP + H(+). The catalysed reaction is a 3-O-[N-acetyl-alpha-D-galactosaminyl]-L-threonyl-[protein] + CMP-N-acetyl-beta-neuraminate = a 3-O-[N-acetyl-alpha-neuraminosyl-(2-&gt;6)-N-acetyl-alpha-D-galactosaminyl]-L-threonyl-[protein] + CMP + H(+). It catalyses the reaction a 3-O-[beta-D-galactosyl-(1-&gt;3)-N-acetyl-alpha-D-galactosaminyl]-L-seryl-[protein] + CMP-N-acetyl-beta-neuraminate = a 3-O-{beta-D-galactosyl-(1-&gt;3)-[N-acetyl-alpha-neuraminosyl-(2-&gt;6)]-N-acetyl-alpha-D-galactosaminyl}-L-seryl-[protein] + CMP + H(+). It carries out the reaction a 3-O-[beta-D-galactosyl-(1-&gt;3)-N-acetyl-alpha-D-galactosaminyl]-L-threonyl-[protein] + CMP-N-acetyl-beta-neuraminate = a 3-O-{beta-D-galactosyl-(1-&gt;3)-[N-acetyl-alpha-neuraminosyl-(2-&gt;6)]-N-acetyl-alpha-D-galactosaminyl}-L-threonyl-[protein] + CMP + H(+). The enzyme catalyses a 3-O-[N-acetyl-alpha-neuraminyl-(2-&gt;3)-beta-D-galactosyl-(1-&gt;3)-N-acetyl-alpha-D-galactosaminyl]-L-threonyl-[protein] + CMP-N-acetyl-beta-neuraminate = a 3-O-{alpha-Neu5Ac-(2-&gt;3)-beta-D-Gal-(1-&gt;3)-[alpha-Neu5Ac-(2-&gt;6)]-alpha-D-GalNAc}-L-threonyl-[protein] + CMP + H(+). It participates in protein modification; protein glycosylation. Protein sialyltransferase specifically expressed in goblet cells that plays a key role in intestinal host-commensal homeostasis. Conjugates sialic acid with an alpha-2-6 linkage to N-acetylgalactosamine (GalNAc) glycan chains linked to serine or threonine in glycoproteins. Generates sialylated T and Tn antigens.. The chain is Alpha-N-acetylgalactosaminide alpha-2,6-sialyltransferase 1 (ST6GALNAC1) from Gallus gallus (Chicken).